The sequence spans 162 residues: MTAIQHFFKTFFLTELLKGLALTGRYTFRRKFTVQFPEEKTPISPRFRGLHALRRYENGEERCIACKLCEAVCPALAITIESETRADNTRRTTRYDIDLTKCIFCGFCEESCPVDSIVETQILEYHGEKRGDLYFTKEMLLAVGDRYEKDIAAAKAADAPYR.

4Fe-4S ferredoxin-type domains lie at Arg54–Glu83 and Thr93–Ile122. Residues Cys63, Cys66, Cys69, Cys73, Cys102, Cys105, Cys108, and Cys112 each coordinate [4Fe-4S] cluster.

Belongs to the complex I 23 kDa subunit family. As to quaternary structure, NDH-1 is composed of 14 different subunits. Subunits NuoA, H, J, K, L, M, N constitute the membrane sector of the complex. [4Fe-4S] cluster serves as cofactor.

It is found in the cell inner membrane. The enzyme catalyses a quinone + NADH + 5 H(+)(in) = a quinol + NAD(+) + 4 H(+)(out). NDH-1 shuttles electrons from NADH, via FMN and iron-sulfur (Fe-S) centers, to quinones in the respiratory chain. The immediate electron acceptor for the enzyme in this species is believed to be ubiquinone. Couples the redox reaction to proton translocation (for every two electrons transferred, four hydrogen ions are translocated across the cytoplasmic membrane), and thus conserves the redox energy in a proton gradient. This is NADH-quinone oxidoreductase subunit I from Burkholderia ambifaria (strain MC40-6).